The sequence spans 194 residues: Adenylate kinase (194 aa).

10–15 is a binding site for ATP; that stretch reads GAGKGT. The NMP stretch occupies residues 30–59; the sequence is STGDMLRAAVAQQSEIGKRAKAVMDAGQLV. Residues Thr31, Arg36, 57–59, 85–88, and Gln92 contribute to the AMP site; these read QLV and GYPR. The interval 126 to 142 is LID; it reads SRVAETIAKGGQVRSDD. ATP is bound at residue Arg127. AMP is bound by residues Arg139 and Arg150. ATP is bound at residue Ala178.

Belongs to the adenylate kinase family. In terms of assembly, monomer.

The protein resides in the cytoplasm. The catalysed reaction is AMP + ATP = 2 ADP. It participates in purine metabolism; AMP biosynthesis via salvage pathway; AMP from ADP: step 1/1. Functionally, catalyzes the reversible transfer of the terminal phosphate group between ATP and AMP. Plays an important role in cellular energy homeostasis and in adenine nucleotide metabolism. In Brucella anthropi (strain ATCC 49188 / DSM 6882 / CCUG 24695 / JCM 21032 / LMG 3331 / NBRC 15819 / NCTC 12168 / Alc 37) (Ochrobactrum anthropi), this protein is Adenylate kinase.